A 321-amino-acid chain; its full sequence is Methionyl-tRNA formyltransferase (321 aa).

112-115 (SILP) provides a ligand contact to (6S)-5,6,7,8-tetrahydrofolate.

Belongs to the Fmt family.

The catalysed reaction is L-methionyl-tRNA(fMet) + (6R)-10-formyltetrahydrofolate = N-formyl-L-methionyl-tRNA(fMet) + (6S)-5,6,7,8-tetrahydrofolate + H(+). Its function is as follows. Attaches a formyl group to the free amino group of methionyl-tRNA(fMet). The formyl group appears to play a dual role in the initiator identity of N-formylmethionyl-tRNA by promoting its recognition by IF2 and preventing the misappropriation of this tRNA by the elongation apparatus. This chain is Methionyl-tRNA formyltransferase, found in Shewanella piezotolerans (strain WP3 / JCM 13877).